Here is a 194-residue protein sequence, read N- to C-terminus: MIGLRPAFSTMLFLLLLTGGVYPLLTTALGQWWFPWQANGSLIHKDNVIRGSALIGQSFTAAGYFHGRPSATADTPYNPLASGGSNLAASNPELDAQIQARVAALRAANPQASSAVPVELTTASASGLDNNLTPGAAAWQIPRVAAARQLPVEQVAQLVAEYTHRPLARFLGQPVVNIVELNLALDALQGHRAK.

The helical transmembrane segment at 12–34 (LFLLLLTGGVYPLLTTALGQWWF) threads the bilayer.

It belongs to the KdpC family. In terms of assembly, the system is composed of three essential subunits: KdpA, KdpB and KdpC.

The protein localises to the cell inner membrane. Functionally, part of the high-affinity ATP-driven potassium transport (or Kdp) system, which catalyzes the hydrolysis of ATP coupled with the electrogenic transport of potassium into the cytoplasm. This subunit acts as a catalytic chaperone that increases the ATP-binding affinity of the ATP-hydrolyzing subunit KdpB by the formation of a transient KdpB/KdpC/ATP ternary complex. The chain is Potassium-transporting ATPase KdpC subunit from Salmonella choleraesuis (strain SC-B67).